Consider the following 892-residue polypeptide: Protein translocase subunit SecA (892 aa).

ATP-binding positions include glutamine 89, 107 to 111 (GEGKT), and aspartate 517. Cysteine 879, cysteine 881, cysteine 890, and histidine 891 together coordinate Zn(2+).

It belongs to the SecA family. As to quaternary structure, monomer and homodimer. Part of the essential Sec protein translocation apparatus which comprises SecA, SecYEG and auxiliary proteins SecDF-YajC and YidC. It depends on Zn(2+) as a cofactor.

It localises to the cell inner membrane. It is found in the cytoplasm. It catalyses the reaction ATP + H2O + cellular proteinSide 1 = ADP + phosphate + cellular proteinSide 2.. In terms of biological role, part of the Sec protein translocase complex. Interacts with the SecYEG preprotein conducting channel. Has a central role in coupling the hydrolysis of ATP to the transfer of proteins into and across the cell membrane, serving as an ATP-driven molecular motor driving the stepwise translocation of polypeptide chains across the membrane. The chain is Protein translocase subunit SecA from Ruthia magnifica subsp. Calyptogena magnifica.